The primary structure comprises 264 residues: MRRIFVQNRELVVPGTLLAQGPYKNGRGTFKEGSRIYSTVIGLVDIKGNTIRVIPLEGPYIPEVGDNVLGKIVDVKFSSWTVDIGSPYSATLKIQDYTDEKIDLLRTDLRKFFDIGDIIYAKVKGINEVNNIELTTKGMPFNGGPLRGGQIIKITSSKVPRVIGKGGSMINMIKKLTQSRIIVGQNGWIWISSKNPELEKLAIEAILKIERESHTRGLTDRIKNMLLSKLQELKERGVIEEIPSLEEETQEETVMENDVEARGP.

Residues 65 to 137 (GDNVLGKIVD…EVNNIELTTK (73 aa)) form the S1 motif domain. A KH domain is found at 147–206 (RGGQIIKITSSKVPRVIGKGGSMINMIKKLTQSRIIVGQNGWIWISSKNPELEKLAIEAI). A compositionally biased stretch (acidic residues) spans 244–258 (SLEEETQEETVMEND). The segment at 244–264 (SLEEETQEETVMENDVEARGP) is disordered.

It belongs to the RRP4 family. Component of the archaeal exosome complex. Forms a trimer of Rrp4 and/or Csl4 subunits. The trimer associates with a hexameric ring-like arrangement composed of 3 Rrp41-Rrp42 heterodimers.

It localises to the cytoplasm. In terms of biological role, non-catalytic component of the exosome, which is a complex involved in RNA degradation. Increases the RNA binding and the efficiency of RNA degradation. Confers strong poly(A) specificity to the exosome. This Pyrococcus furiosus (strain ATCC 43587 / DSM 3638 / JCM 8422 / Vc1) protein is Exosome complex component Rrp4.